Here is a 95-residue protein sequence, read N- to C-terminus: Aspartyl/glutamyl-tRNA(Asn/Gln) amidotransferase subunit C (95 aa).

Belongs to the GatC family. Heterotrimer of A, B and C subunits.

The catalysed reaction is L-glutamyl-tRNA(Gln) + L-glutamine + ATP + H2O = L-glutaminyl-tRNA(Gln) + L-glutamate + ADP + phosphate + H(+). It carries out the reaction L-aspartyl-tRNA(Asn) + L-glutamine + ATP + H2O = L-asparaginyl-tRNA(Asn) + L-glutamate + ADP + phosphate + 2 H(+). In terms of biological role, allows the formation of correctly charged Asn-tRNA(Asn) or Gln-tRNA(Gln) through the transamidation of misacylated Asp-tRNA(Asn) or Glu-tRNA(Gln) in organisms which lack either or both of asparaginyl-tRNA or glutaminyl-tRNA synthetases. The reaction takes place in the presence of glutamine and ATP through an activated phospho-Asp-tRNA(Asn) or phospho-Glu-tRNA(Gln). In Hyphomonas neptunium (strain ATCC 15444), this protein is Aspartyl/glutamyl-tRNA(Asn/Gln) amidotransferase subunit C.